Reading from the N-terminus, the 73-residue chain is DNA-directed RNA polymerase subunit omega (73 aa).

The protein belongs to the RNA polymerase subunit omega family. As to quaternary structure, in cyanobacteria the RNAP catalytic core is composed of 2 alpha, 1 beta, 1 beta', 1 gamma and 1 omega subunit. When a sigma factor is associated with the core the holoenzyme is formed, which can initiate transcription.

It catalyses the reaction RNA(n) + a ribonucleoside 5'-triphosphate = RNA(n+1) + diphosphate. Its function is as follows. Promotes RNA polymerase assembly. Latches the N- and C-terminal regions of the beta' subunit thereby facilitating its interaction with the beta and alpha subunits. This Gloeobacter violaceus (strain ATCC 29082 / PCC 7421) protein is DNA-directed RNA polymerase subunit omega.